The chain runs to 309 residues: Cytochrome c biogenesis protein CcsA (309 aa).

Helical transmembrane passes span 18-38 (LGLL…GAVF), 48-68 (LITI…WSIS), 73-93 (ISNL…GQLL), 102-122 (IIPS…CFVL), 148-168 (VMLS…VLFI), 216-236 (SILV…VWAN), 250-267 (TWAF…HMRI), and 279-299 (LAST…FLGI).

The protein belongs to the CcmF/CycK/Ccl1/NrfE/CcsA family. In terms of assembly, may interact with ccs1.

It is found in the cellular thylakoid membrane. In terms of biological role, required during biogenesis of c-type cytochromes (cytochrome c6 and cytochrome f) at the step of heme attachment. The protein is Cytochrome c biogenesis protein CcsA of Prochlorococcus marinus (strain AS9601).